A 931-amino-acid chain; its full sequence is GPI ethanolamine phosphate transferase 1 (931 aa).

A topological domain (cytoplasmic) is located at residue Met1. The chain crosses the membrane as a helical span at residues 2–22 (LLFFALGLLIHFVFFASIFDI). Over 23–442 (YFTSPLVHGM…SYYHTYDRLF (420 aa)) the chain is Lumenal. N-linked (GlcNAc...) asparagine glycosylation is found at Asn128, Asn192, Asn295, and Asn350. A helical membrane pass occupies residues 443-463 (LGINVAVGFVGWMSYTSLLII). Residues 464-480 (KSHSNIPKGTRKEGKKP) lie on the Cytoplasmic side of the membrane. A helical membrane pass occupies residues 481–501 (HCLLLYSFIATGVLVACFLMI). Residue Gln502 is a topological domain, lumenal. The chain crosses the membrane as a helical span at residues 503–523 (ACPWTYYVYCLLPVPIWYAVL). The Cytoplasmic portion of the chain corresponds to 524-543 (REHEVIQDLVESLLTFPRSH). Residues 544–564 (FVAYLLVFTLGIEVLVLSFFY) traverse the membrane as a helical segment. Residue Arg565 is a topological domain, lumenal. The chain crosses the membrane as a helical span at residues 566 to 586 (YMLTAGLIVFAGWPFLTQLWT). Residues 587 to 591 (RAKIT) are Cytoplasmic-facing. A helical membrane pass occupies residues 592 to 612 (FLSWAFFSLLLAVFPLMPVVG). Residues 613 to 618 (RKPNLS) lie on the Lumenal side of the membrane. Asn616 carries N-linked (GlcNAc...) asparagine glycosylation. A helical transmembrane segment spans residues 619 to 639 (LVMGAGFLVLLLSLAVVTTLG). Over 640-649 (KRNIKLVKGE) the chain is Cytoplasmic. A helical membrane pass occupies residues 650 to 670 (LLVLLLQMLSTVLSMYVVYST). The Lumenal segment spans residues 671–685 (HHSLLKKEGLPLMNQ). Residues 686 to 706 (IVSWATLASSLVAPLLSSTAL) form a helical membrane-spanning segment. Topologically, residues 707 to 723 (SQRLASILLSLMSTYLL) are cytoplasmic. The chain crosses the membrane as a helical span at residues 724 to 744 (LSTGYEALFPLVLSCLMFVWI). At 745-786 (QVEQETLQQPGVSCKQKLTSIQFTCDTDIAQFRQLCPDDIRR) the chain is on the lumenal side. Residues 787 to 807 (AFFLVFFLLTAFFGTGNIASI) form a helical membrane-spanning segment. Topologically, residues 808–824 (NSFDLASVYCFLTVFSP) are cytoplasmic. The chain crosses the membrane as a helical span at residues 825 to 845 (FMMGALMMWKILIPFVLVMCA). At 846–858 (FEAVQITTQLSSK) the chain is on the lumenal side. A helical membrane pass occupies residues 859 to 879 (GLFLVVLIISDIMALHFFFLV). The Cytoplasmic segment spans residues 880–894 (KDSGSWLDIGTSISH). Residues 895–915 (YVIVMSMTIFLVFLNGLAQLL) form a helical membrane-spanning segment. The Lumenal segment spans residues 916-931 (TTKKLQLCGKPKSHLM).

This sequence belongs to the PIGG/PIGN/PIGO family. PIGN subfamily.

The protein resides in the endoplasmic reticulum membrane. It functions in the pathway glycolipid biosynthesis; glycosylphosphatidylinositol-anchor biosynthesis. Functionally, ethanolamine phosphate transferase that catalyzes an ethanolamine phosphate (EtNP) transfer from phosphatidylethanolamine (PE) to the 2-OH position of the first alpha-1,4-linked mannose of the alpha-D-Man-(1-&gt;6)-alpha-D-Man-(1-&gt;4)-alpha-D-GlcN-(1-&gt;6)-(1-radyl,2-acyl-sn-glycero-3-phospho)-2-acyl-inositol (also termed H3) intermediate to generate an alpha-D-Man-(1-&gt;6)-2-PEtn-alpha-D-Man-(1-&gt;4)-alpha-D-GlcN-(1-&gt;6)-(1-radyl,2-acyl-sn-glycero-3-phospho)-2-acyl-inositol and participates in the eighth step of the glycosylphosphatidylinositol-anchor biosynthesis. May act as suppressor of replication stress and chromosome missegregation. In Mus musculus (Mouse), this protein is GPI ethanolamine phosphate transferase 1.